A 334-amino-acid chain; its full sequence is Inositol 2-dehydrogenase (334 aa).

Belongs to the Gfo/Idh/MocA family. Homotetramer.

The enzyme catalyses myo-inositol + NAD(+) = scyllo-inosose + NADH + H(+). Functionally, involved in the oxidation of myo-inositol (MI) to 2-keto-myo-inositol (2KMI or 2-inosose). In Cereibacter sphaeroides (strain ATCC 17023 / DSM 158 / JCM 6121 / CCUG 31486 / LMG 2827 / NBRC 12203 / NCIMB 8253 / ATH 2.4.1.) (Rhodobacter sphaeroides), this protein is Inositol 2-dehydrogenase.